A 416-amino-acid chain; its full sequence is Trifolitoxin-processing protein TfxD (416 aa).

11 helical membrane passes run 24–44 (MIPN…ALQV), 48–68 (VLIT…LICM), 79–99 (VFAA…ALIA), 114–134 (IAFI…AYCA), 153–173 (SSLI…FAGT), 176–196 (SIIS…LAYA), 230–250 (ASFI…VVAA), 255–275 (IAVF…LAIG), 295–315 (VLIA…VGLI), 322–342 (IFAL…CDGL), and 372–392 (VILA…ALVL).

Its subcellular location is the cell membrane. The actions of the proteins TfxB, TfxD and TfxF are implicated in the processing of the inactive trifolitoxin (TfxA) precursor into the active peptide. The chain is Trifolitoxin-processing protein TfxD (tfxD) from Rhizobium leguminosarum bv. trifolii.